Here is a 289-residue protein sequence, read N- to C-terminus: 4-diphosphocytidyl-2-C-methyl-D-erythritol kinase (289 aa).

Lys10 is an active-site residue. Residue 94–104 (PVAAGLAGGSS) participates in ATP binding. Residue Asp136 is part of the active site.

It belongs to the GHMP kinase family. IspE subfamily.

It catalyses the reaction 4-CDP-2-C-methyl-D-erythritol + ATP = 4-CDP-2-C-methyl-D-erythritol 2-phosphate + ADP + H(+). The protein operates within isoprenoid biosynthesis; isopentenyl diphosphate biosynthesis via DXP pathway; isopentenyl diphosphate from 1-deoxy-D-xylulose 5-phosphate: step 3/6. Functionally, catalyzes the phosphorylation of the position 2 hydroxy group of 4-diphosphocytidyl-2C-methyl-D-erythritol. In Bacillus mycoides (strain KBAB4) (Bacillus weihenstephanensis), this protein is 4-diphosphocytidyl-2-C-methyl-D-erythritol kinase.